The following is a 321-amino-acid chain: Glutamyl-Q tRNA(Asp) synthetase (321 aa).

L-glutamate-binding positions include 25 to 29 and glutamate 61; that span reads RFAPS. The short motif at 28–38 is the 'HIGH' region element; it reads PSPSGDLHFGS. Residues cysteine 117, cysteine 119, tyrosine 131, and cysteine 135 each contribute to the Zn(2+) site. Tyrosine 188 and arginine 206 together coordinate L-glutamate. Positions 244–248 match the 'KMSKS' region motif; the sequence is KLSKQ. Lysine 247 lines the ATP pocket.

This sequence belongs to the class-I aminoacyl-tRNA synthetase family. GluQ subfamily. The cofactor is Zn(2+).

Functionally, catalyzes the tRNA-independent activation of glutamate in presence of ATP and the subsequent transfer of glutamate onto a tRNA(Asp). Glutamate is transferred on the 2-amino-5-(4,5-dihydroxy-2-cyclopenten-1-yl) moiety of the queuosine in the wobble position of the QUC anticodon. The chain is Glutamyl-Q tRNA(Asp) synthetase from Yersinia pestis.